We begin with the raw amino-acid sequence, 466 residues long: tRNA modification GTPase MnmE (466 aa).

Positions 24, 85, and 128 each coordinate (6S)-5-formyl-5,6,7,8-tetrahydrofolate. Residues 224-384 enclose the TrmE-type G domain; the sequence is GLNIVLAGQP…LRTELLHLVG (161 aa). Asn-234 contributes to the K(+) binding site. GTP contacts are provided by residues 234–239, 253–259, and 278–281; these read NVGKSS, TPIAGTT, and DTAG. Ser-238 contacts Mg(2+). Positions 253, 255, and 258 each coordinate K(+). A Mg(2+)-binding site is contributed by Thr-259. Position 466 (Lys-466) interacts with (6S)-5-formyl-5,6,7,8-tetrahydrofolate.

Belongs to the TRAFAC class TrmE-Era-EngA-EngB-Septin-like GTPase superfamily. TrmE GTPase family. Homodimer. Heterotetramer of two MnmE and two MnmG subunits. K(+) serves as cofactor.

The protein localises to the cytoplasm. Its function is as follows. Exhibits a very high intrinsic GTPase hydrolysis rate. Involved in the addition of a carboxymethylaminomethyl (cmnm) group at the wobble position (U34) of certain tRNAs, forming tRNA-cmnm(5)s(2)U34. This Herminiimonas arsenicoxydans protein is tRNA modification GTPase MnmE.